Consider the following 194-residue polypeptide: Putative manganese efflux pump MntP (194 aa).

6 helical membrane-spanning segments follow: residues 3–23, 37–57, 65–85, 112–132, 137–157, and 170–190; these read PITT…AAIG, LYVA…GWLL, IATF…IHMI, LAAT…SMAF, IGIV…FGVM, and AEIV…YEHL.

The protein belongs to the MntP (TC 9.B.29) family.

Its subcellular location is the cell inner membrane. In terms of biological role, probably functions as a manganese efflux pump. The chain is Putative manganese efflux pump MntP from Xylella fastidiosa (strain M23).